The primary structure comprises 1436 residues: MAP kinase kinase kinase win1 (1436 aa).

Residues 56–85 (LELPNNGKEENHRRPSVARSSSDRSKASAK) are disordered. The segment covering 76 to 85 (SSDRSKASAK) has biased composition (basic and acidic residues). Ser-224 carries the phosphoserine modification. Thr-226 bears the Phosphothreonine mark. The interval 282 to 1123 (EDSDLDSETS…SNITIRWQQG (842 aa)) is interaction with tea4. The Protein kinase domain maps to 1120-1406 (WQQGGLIGSG…AAELLMDPWV (287 aa)). ATP is bound by residues 1126–1134 (IGSGSFGTV) and Lys-1149. Asp-1244 functions as the Proton acceptor in the catalytic mechanism.

The protein belongs to the protein kinase superfamily. STE Ser/Thr protein kinase family. MAP kinase kinase kinase subfamily. In terms of assembly, interacts with tea4.

It catalyses the reaction L-seryl-[protein] + ATP = O-phospho-L-seryl-[protein] + ADP + H(+). It carries out the reaction L-threonyl-[protein] + ATP = O-phospho-L-threonyl-[protein] + ADP + H(+). Functionally, involved in a signal transduction pathway that is activated by changes in the osmolarity of the extracellular environment. Activates the wis1 MAP kinase kinase by phosphorylation. This is MAP kinase kinase kinase win1 (win1) from Schizosaccharomyces pombe (strain 972 / ATCC 24843) (Fission yeast).